A 413-amino-acid chain; its full sequence is Transcription factor bHLH23 (413 aa).

The tract at residues 40-75 is disordered; the sequence is SSQTQTPSCDPPLILRGSGSGDGEGNGPLPQPPPPL. The residue at position 186 (T186) is a Phosphothreonine. At S191 the chain carries Phosphoserine. Disordered stretches follow at residues 232-278 and 391-413; these read TEPV…RSRA and ETEQ…KMFS. The segment covering 246 to 257 has biased composition (basic and acidic residues); that stretch reads TDERKRKTREET. The region spanning 277–326 is the bHLH domain; that stretch reads RAAIMHKLSERRRRQKINEMMKALQELLPRCTKTDRSSMLDDVIEYVKSL.

Homodimer. In terms of tissue distribution, expressed constitutively in leaves, stems, and flowers.

It localises to the nucleus. The chain is Transcription factor bHLH23 (BHLH23) from Arabidopsis thaliana (Mouse-ear cress).